A 305-amino-acid polypeptide reads, in one-letter code: Ribonuclease Z (305 aa).

Residues His-61, His-63, Asp-65, His-66, His-138, Asp-208, and His-266 each contribute to the Zn(2+) site. Asp-65 functions as the Proton acceptor in the catalytic mechanism.

Belongs to the RNase Z family. As to quaternary structure, homodimer. It depends on Zn(2+) as a cofactor.

The catalysed reaction is Endonucleolytic cleavage of RNA, removing extra 3' nucleotides from tRNA precursor, generating 3' termini of tRNAs. A 3'-hydroxy group is left at the tRNA terminus and a 5'-phosphoryl group is left at the trailer molecule.. Functionally, zinc phosphodiesterase, which displays some tRNA 3'-processing endonuclease activity. Probably involved in tRNA maturation, by removing a 3'-trailer from precursor tRNA. This chain is Ribonuclease Z, found in Methanosarcina acetivorans (strain ATCC 35395 / DSM 2834 / JCM 12185 / C2A).